A 602-amino-acid chain; its full sequence is mRNA-decapping enzyme 1A (602 aa).

Phosphoserine is present on Ser-82. Positions 152-161 are enriched in basic and acidic residues; the sequence is RSQQAARDKQ. Disordered regions lie at residues 152-174, 191-234, and 267-291; these read RSQQAARDKQSPSQANGCSDQRP, NQMG…PSGH, and GDASQKEPSSFLPFPFEQSGGAPQS. Phosphoserine is present on residues Ser-162, Ser-199, and Ser-200. Polar residues predominate over residues 193–229; it reads MGGSNISSPGLQPSTQLSNLGSTETLEETPSGSQDKS. A phosphoserine mark is found at Ser-335 and Ser-339. Thr-367 carries the phosphothreonine modification. A Phosphoserine modification is found at Ser-372. Asymmetric dimethylarginine is present on Arg-395. Thr-420 carries the phosphothreonine modification. 4 positions are modified to phosphoserine: Ser-441, Ser-542, Ser-543, and Ser-545. Thr-548 and Thr-551 each carry phosphothreonine.

It belongs to the DCP1 family. As to quaternary structure, forms a complex with EDC3, DCP2, DDX6 and EDC4/HEDLS, within this complex directly interacts with EDC3. Part of a cytoplasmic complex containing proteins involved in mRNA decay, including XRN1 and LSM1. Interacts with DCP1B. Interacts with DCP2. Interacts with DDX17 in an RNA-independent manner. Interacts with PNRC2. Interacts with SMAD4. Interacts with UPF1. Interacts with ZC3HAV1. Interacts with ZFP36L1. Interacts with NBDY. Interacts with DHX34; the interaction is RNA-independent. As to expression, ubiquitous, with highest expression in the spleen and testis (at protein level).

Its subcellular location is the cytoplasm. It is found in the P-body. The protein localises to the nucleus. The catalysed reaction is a 5'-end (N(7)-methyl 5'-triphosphoguanosine)-ribonucleoside in mRNA + H2O = N(7)-methyl-GDP + a 5'-end phospho-ribonucleoside in mRNA + 2 H(+). In terms of biological role, necessary for the degradation of mRNAs, both in normal mRNA turnover and in nonsense-mediated mRNA decay. Removes the 7-methyl guanine cap structure from mRNA molecules, yielding a 5'-phosphorylated mRNA fragment and 7m-GDP. Contributes to the transactivation of target genes after stimulation by TGFB1. Essential for embryonic development. This Mus musculus (Mouse) protein is mRNA-decapping enzyme 1A (Dcp1a).